Consider the following 218-residue polypeptide: tRNA (cytidine(56)-2'-O)-methyltransferase (218 aa).

S-adenosyl-L-methionine contacts are provided by residues L81, 106 to 110, and 124 to 131; these read GAEKV and IGNQPHSE. Residues 170 to 218 are disordered; the sequence is KVGEEGPSGGAPGVRAERGRGGRGEGVQGADEVRGHKRGATDRDLGDET. Residues 200 to 218 are compositionally biased toward basic and acidic residues; it reads DEVRGHKRGATDRDLGDET.

It belongs to the aTrm56 family. Homodimer.

The protein localises to the cytoplasm. It carries out the reaction cytidine(56) in tRNA + S-adenosyl-L-methionine = 2'-O-methylcytidine(56) in tRNA + S-adenosyl-L-homocysteine + H(+). Functionally, specifically catalyzes the AdoMet-dependent 2'-O-ribose methylation of cytidine at position 56 in tRNAs. The protein is tRNA (cytidine(56)-2'-O)-methyltransferase of Ignicoccus hospitalis (strain KIN4/I / DSM 18386 / JCM 14125).